The chain runs to 308 residues: Olfactory receptor 5K1 (308 aa).

Over 1 to 25 the chain is Extracellular; that stretch reads MAEENHTMKNEFILTGFTDHPELKT. Residue Asn5 is glycosylated (N-linked (GlcNAc...) asparagine). Residues 26-46 form a helical membrane-spanning segment; the sequence is LLFVVFFAIYLITVVGNISLV. Topologically, residues 47-54 are cytoplasmic; it reads ALIFTHRR. The chain crosses the membrane as a helical span at residues 55-75; it reads LHTPMYIFLGNLALVDSCCAC. Residues 76–99 are Extracellular-facing; the sequence is AITPKMLENFFSENKRISLYECAV. An intrachain disulfide couples Cys97 to Cys189. Residues 100-120 form a helical membrane-spanning segment; it reads QFYFLCTVETADCFLLAAMAY. Residues 121-139 are Cytoplasmic-facing; the sequence is DRYVAICNPLQYHIMMSKK. A helical membrane pass occupies residues 140–160; that stretch reads LCIQMTTGAFIAGNLHSMIHV. Topologically, residues 161–196 are extracellular; it reads GLVFRLVFCGSNHINHFYCDILPLYRLSCVDPYINE. Residues 197–217 traverse the membrane as a helical segment; that stretch reads LVLFIFSGSVQVFTIGSVLIS. Topologically, residues 218-237 are cytoplasmic; sequence YLYILLTIFKMKSKEGRAKA. The helical transmembrane segment at 238–258 threads the bilayer; the sequence is FSTCASHFLSVSLFYGSLFFM. Residues 259 to 271 lie on the Extracellular side of the membrane; the sequence is YVRPNLLEEGDKD. The helical transmembrane segment at 272–292 threads the bilayer; sequence IPAAILFTIVVPLLNPFIYSL. The Cytoplasmic segment spans residues 293-308; the sequence is RNREVISVLRKILMKK.

Belongs to the G-protein coupled receptor 1 family.

The protein resides in the cell membrane. In terms of biological role, odorant receptor. The protein is Olfactory receptor 5K1 (OR5K1) of Homo sapiens (Human).